Consider the following 61-residue polypeptide: Large ribosomal subunit protein uL29 (61 aa).

Belongs to the universal ribosomal protein uL29 family.

The chain is Large ribosomal subunit protein uL29 from Xanthomonas euvesicatoria pv. vesicatoria (strain 85-10) (Xanthomonas campestris pv. vesicatoria).